A 261-amino-acid polypeptide reads, in one-letter code: 5'-nucleotidase SurE (261 aa).

Residues Asp-8, Asp-9, Ser-43, and Asn-96 each contribute to the a divalent metal cation site.

Belongs to the SurE nucleotidase family. Requires a divalent metal cation as cofactor.

Its subcellular location is the cytoplasm. It catalyses the reaction a ribonucleoside 5'-phosphate + H2O = a ribonucleoside + phosphate. Nucleotidase that shows phosphatase activity on nucleoside 5'-monophosphates. The protein is 5'-nucleotidase SurE of Cereibacter sphaeroides (strain ATCC 17029 / ATH 2.4.9) (Rhodobacter sphaeroides).